The following is a 219-amino-acid chain: GTP cyclohydrolase 1 (219 aa).

Residues 1–37 (MDAVLKSLSVRLPDAADKRSDTGRPERVTERPTRQEA) form a disordered region. A compositionally biased stretch (basic and acidic residues) spans 14-37 (DAADKRSDTGRPERVTERPTRQEA). Residues C108, H111, and C179 each contribute to the Zn(2+) site.

Belongs to the GTP cyclohydrolase I family. As to quaternary structure, homomer.

The enzyme catalyses GTP + H2O = 7,8-dihydroneopterin 3'-triphosphate + formate + H(+). It participates in cofactor biosynthesis; 7,8-dihydroneopterin triphosphate biosynthesis; 7,8-dihydroneopterin triphosphate from GTP: step 1/1. This chain is GTP cyclohydrolase 1, found in Methylobacterium sp. (strain 4-46).